We begin with the raw amino-acid sequence, 1020 residues long: Neurofilament heavy polypeptide (1020 aa).

Residues 1 to 100 form a head region; the sequence is MMSFGGADAL…VATSRSEKEQ (100 aa). The segment at 58-83 is disordered; it reads VSASPSRFRGAGAASSTDSLDTLSNG. Polar residues predominate over residues 71-82; sequence ASSTDSLDTLSN. Phosphoserine is present on residues S76 and S124. In terms of domain architecture, IF rod spans 97-413; that stretch reads EKEQLQALND…KLLEGEECRI (317 aa). Positions 101–132 are coil 1A; the sequence is LQALNDRFAGYIDKVRQLEAHNRSLEGEAAAL. Residues 133 to 145 form a linker 1 region; it reads RQQQAGRSAMGEL. A coil 1B region spans residues 146–244; the sequence is YEREVREMRG…QEEVGELLGQ (99 aa). The segment at 245-266 is linker 12; it reads IQGSGAAQAQMQAETRDALKCD. The coil 2A stretch occupies residues 267 to 288; the sequence is VTSALREIRAQLEGHAVQSTLQ. The segment at 289–292 is linker 2; that stretch reads SEEW. Residues 293 to 413 are coil 2B; sequence FRVRLDRLSE…KLLEGEECRI (121 aa). Phosphoserine occurs at positions 347 and 421. A tail region spans residues 414 to 1020; that stretch reads GFGPIPFSLP…ATEDKAAKGK (607 aa). The segment at 456-1020 is disordered; it reads IVEEQTEETQ…ATEDKAAKGK (565 aa). Acidic residues-rich tracts occupy residues 459 to 475 and 483 to 498; these read EQTE…EEEE and GKEE…EGGE. A phosphoserine mark is found at S511, S526, S532, S540, S546, S552, S560, S566, S574, S580, S586, S594, S600, S606, S614, S620, S628, S634, S640, S648, S654, S662, S668, S676, S682, S690, S696, and S704. Positions 511–1020 are enriched in basic and acidic residues; the sequence is SPEKEAKSPV…ATEDKAAKGK (510 aa). Repeat copies occupy residues 525–530, 531–536, 539–544, and 545–550. The segment at 525 to 826 is 30 X 6 AA repeats of K-S-P-[AEPV]-[EAK]-[AEVK]; sequence KSPAEAKSPE…KEEVKSPVKE (302 aa). Repeat unit 5 spans residues 559 to 564; that stretch reads KSPPEA. Tandem repeats lie at residues 573 to 578 and 579 to 584. 2 repeat units span residues 593 to 598 and 599 to 604. The stretch at 613–618 is repeat 10; sequence KSPAEA. 4 tandem repeats follow at residues 627-632, 633-638, 639-644, and 647-652. 12 repeat units span residues 661–666, 667–672, 675–680, 681–686, 689–694, 695–700, 703–708, 709–714, 717–722, 723–728, 737–742, and 745–750. A phosphoserine mark is found at S718, S724, and S738. Phosphoserine is present on residues S752 and S763. Repeat 27 spans residues 762–767; sequence KSPEAK. T768 is modified (phosphothreonine). 3 consecutive repeat copies span residues 786–791, 794–799, and 821–826. Phosphoserine is present on residues S787, S795, S822, and S888.

Belongs to the intermediate filament family. Forms heterodimers with NEFL; which can further hetero-oligomerize (in vitro). Forms heterodimers with INA (in vitro). There are a number of repeats of the tripeptide K-S-P, NFH is phosphorylated on a number of the serines in this motif. It is thought that phosphorylation of NFH results in the formation of interfilament cross bridges that are important in the maintenance of axonal caliber. Post-translationally, phosphorylation seems to play a major role in the functioning of the larger neurofilament polypeptides (NF-M and NF-H), the levels of phosphorylation being altered developmentally and coincidentally with a change in the neurofilament function. In terms of processing, phosphorylated in the head and rod regions by the PKC kinase PKN1, leading to the inhibition of polymerization.

The protein resides in the cytoplasm. It localises to the cytoskeleton. It is found in the cell projection. The protein localises to the axon. In terms of biological role, neurofilaments usually contain three intermediate filament proteins: NEFL, NEFM, and NEFH which are involved in the maintenance of neuronal caliber. NEFH has an important function in mature axons that is not subserved by the two smaller NF proteins. May additionally cooperate with the neuronal intermediate filament proteins PRPH and INA to form neuronal filamentous networks. The protein is Neurofilament heavy polypeptide (NEFH) of Homo sapiens (Human).